Reading from the N-terminus, the 289-residue chain is NADPH-dependent 7-cyano-7-deazaguanine reductase (289 aa).

81–83 (IES) contributes to the substrate binding site. 83–84 (SK) lines the NADPH pocket. Cysteine 196 functions as the Thioimide intermediate in the catalytic mechanism. The active-site Proton donor is aspartate 203. Residue 235 to 236 (HE) coordinates substrate. 264–265 (RG) is an NADPH binding site.

The protein belongs to the GTP cyclohydrolase I family. QueF type 2 subfamily. In terms of assembly, homodimer.

Its subcellular location is the cytoplasm. It carries out the reaction 7-aminomethyl-7-carbaguanine + 2 NADP(+) = 7-cyano-7-deazaguanine + 2 NADPH + 3 H(+). The protein operates within tRNA modification; tRNA-queuosine biosynthesis. Catalyzes the NADPH-dependent reduction of 7-cyano-7-deazaguanine (preQ0) to 7-aminomethyl-7-deazaguanine (preQ1). The chain is NADPH-dependent 7-cyano-7-deazaguanine reductase from Albidiferax ferrireducens (strain ATCC BAA-621 / DSM 15236 / T118) (Rhodoferax ferrireducens).